The sequence spans 338 residues: 4-hydroxy-2-oxovalerate aldolase (338 aa).

A Pyruvate carboxyltransferase domain is found at 4-254; it reads PRLTDTTLRD…NPGLDVLALM (251 aa). 12–13 contributes to the substrate binding site; that stretch reads RD. Residue Asp-13 participates in Mn(2+) binding. His-16 functions as the Proton acceptor in the catalytic mechanism. Ser-166 and His-193 together coordinate substrate. Residues His-193 and His-195 each coordinate Mn(2+). A substrate-binding site is contributed by Tyr-284.

Belongs to the 4-hydroxy-2-oxovalerate aldolase family.

It carries out the reaction (S)-4-hydroxy-2-oxopentanoate = acetaldehyde + pyruvate. The sequence is that of 4-hydroxy-2-oxovalerate aldolase from Roseiflexus sp. (strain RS-1).